A 341-amino-acid polypeptide reads, in one-letter code: Aspartate--ammonia ligase (341 aa).

Belongs to the class-II aminoacyl-tRNA synthetase family. AsnA subfamily.

It is found in the cytoplasm. It catalyses the reaction L-aspartate + NH4(+) + ATP = L-asparagine + AMP + diphosphate + H(+). It functions in the pathway amino-acid biosynthesis; L-asparagine biosynthesis; L-asparagine from L-aspartate (ammonia route): step 1/1. This Clostridium tetani (strain Massachusetts / E88) protein is Aspartate--ammonia ligase.